The following is a 519-amino-acid chain: Glucose-1-phosphate adenylyltransferase large subunit 2, chloroplastic/amyloplastic (519 aa).

This sequence belongs to the bacterial/plant glucose-1-phosphate adenylyltransferase family. In terms of assembly, heterotetramer. As to expression, leaves and tubers.

The protein localises to the plastid. Its subcellular location is the chloroplast. The protein resides in the amyloplast. The catalysed reaction is alpha-D-glucose 1-phosphate + ATP + H(+) = ADP-alpha-D-glucose + diphosphate. The protein operates within glycan biosynthesis; starch biosynthesis. Its activity is regulated as follows. Activated by 3'phosphoglycerate, inhibited by orthophosphate. Allosteric regulation. Functionally, this protein plays a role in synthesis of starch. It catalyzes the synthesis of the activated glycosyl donor, ADP-glucose from Glc-1-P and ATP. The protein is Glucose-1-phosphate adenylyltransferase large subunit 2, chloroplastic/amyloplastic (AGPS2) of Solanum tuberosum (Potato).